We begin with the raw amino-acid sequence, 374 residues long: Fatty acid conjugase FAC2 A (374 aa).

Transmembrane regions (helical) follow at residues 50 to 70 (IIVTCILFYVASNYIPMLPGF) and 74 to 94 (IVWPVYWISQGVFLGRLWMIG). Residues 95–99 (HECGH) carry the Histidine box-1 motif. Residues 131–135 (HRNHH) carry the Histidine box-2 motif. The next 3 helical transmembrane spans lie at 168-188 (MGLMITMLCKLTFGYAAYIMF), 219-239 (VLFSDVGICIVLYACYRIVMV), and 246-266 (FYVYGIPWVIMSAILFAATYL). The short motif at 306–310 (HVIHH) is the Histidine box-3 element.

This sequence belongs to the fatty acid desaturase type 1 family. Expressed exclusively in the developing seeds. Not detected in leaves or flower buds.

The protein localises to the microsome membrane. It carries out the reaction a (9Z,12Z)-octadecadienoyl-containing glycerolipid + AH2 + O2 = a (8E,10E,12Z)-octadecatrienoyl-containing glycerolipid + A + 2 H2O. It participates in lipid metabolism; polyunsaturated fatty acid biosynthesis. Functionally, fatty acid conjugase converting 18:2(9Z, 12Z) to calendic acid 18:3(8E, 10E, 12Z). Converts alpha-linolenic acid (18:3(9Z, 12Z, 15Z)) into 18:4(8E, 10E, 12Z, 15Z). Also has weak activity on the mono-unsaturates 16:1(9Z) and 18:1(9Z) producing two conjugated double bonds at delta(8) and delta(10) position. In Calendula officinalis (Pot marigold), this protein is Fatty acid conjugase FAC2 A.